Consider the following 458-residue polypeptide: Retinoic acid receptor alpha-B (458 aa).

The interval 1–79 (MYESVDVVGL…PPSPPPPPRV (79 aa)) is modulating. A disordered region spans residues 48 to 75 (HWSGSNHSVETQSTSSEEIVPSPPSPPP). Residues 49–64 (WSGSNHSVETQSTSSE) show a composition bias toward polar residues. Residues 80 to 155 (YKPCFVCQDK…VGMSKESVRN (76 aa)) constitute a DNA-binding region (nuclear receptor). NR C4-type zinc fingers lie at residues 83 to 103 (CFVCQDKSSGYHYGVSACEGC) and 119 to 138 (CHREKSCIINKVTRNRCQYC). Residues 156-177 (DRNKRKKDDKKQECLENYVLSP) are hinge. In terms of domain architecture, NR LBD spans 178-412 (DTEKMIEQVR…PLIQEMLENS (235 aa)). The 9aaTAD motif lies at 403–411 (PLIQEMLEN). A disordered region spans residues 411–458 (NSEGLEGGGSKGAGGGGGGGGGKGAPPGSCSPSLSPSSAHSSPSAHSP). Residues 415-435 (LEGGGSKGAGGGGGGGGGKGA) show a composition bias toward gly residues. The segment covering 436–458 (PPGSCSPSLSPSSAHSSPSAHSP) has biased composition (low complexity).

The protein belongs to the nuclear hormone receptor family. NR1 subfamily. In terms of assembly, heterodimer; with an rxr molecule. Binds DNA preferentially as a rar/rxr heterodimer. In terms of tissue distribution, in the embryo, zygotic expression largely overlaps that of raraa, with high levels in hindbrain, lateral plate mesoderm (LPM) and tail bud, but in later stages rarab is expressed more broadly in the brain, pectoral fin bud and pharyngeal arches.

The protein localises to the nucleus. Receptor for retinoic acid. Retinoic acid receptors bind as heterodimers to their target response elements in response to their ligands, all-trans or 9-cis retinoic acid, and regulate gene expression in various biological processes. The rar/rxr heterodimers bind to the retinoic acid response elements (RARE) composed of tandem 5'-AGGTCA-3' sites known as DR1-DR5. Required for hindbrain development and, in lateral plate mesoderm, for specification of the pectoral fins. The polypeptide is Retinoic acid receptor alpha-B (Danio rerio (Zebrafish)).